A 487-amino-acid chain; its full sequence is GlcNAc-binding protein A (487 aa).

Positions Met1 to Ala29 are cleaved as a signal peptide. Residues Tyr30 to Phe201 form the Chitin-binding type-4 domain. Residues Ala438 to Trp479 form the Chitin-binding type-3 domain.

The protein belongs to the GbpA family.

The protein localises to the secreted. In terms of biological role, probably interacts with GlcNAc residues. May promote attachment to both epithelial cell surfaces and chitin. The sequence is that of GlcNAc-binding protein A from Vibrio campbellii (strain ATCC BAA-1116).